The primary structure comprises 176 residues: N-alpha-acetyltransferase NAT5 (176 aa).

The N-acetyltransferase domain occupies 14–176; the sequence is NNLGMLTKLA…DAILLKKHIS (163 aa).

Belongs to the acetyltransferase family. In terms of assembly, component of the N-terminal acetyltransferase A (NatA) complex, which is composed of ARD1, NAT1 and NAT5.

It localises to the cytoplasm. The enzyme catalyses N-terminal L-methionyl-L-alanyl-[protein] + acetyl-CoA = N-terminal N(alpha)-acetyl-L-methionyl-L-alanyl-[protein] + CoA + H(+). The catalysed reaction is N-terminal L-methionyl-L-seryl-[protein] + acetyl-CoA = N-terminal N(alpha)-acetyl-L-methionyl-L-seryl-[protein] + CoA + H(+). It catalyses the reaction N-terminal L-methionyl-L-valyl-[protein] + acetyl-CoA = N-terminal N(alpha)-acetyl-L-methionyl-L-valyl-[protein] + CoA + H(+). It carries out the reaction N-terminal L-methionyl-L-threonyl-[protein] + acetyl-CoA = N-terminal N(alpha)-acetyl-L-methionyl-L-threonyl-[protein] + CoA + H(+). The enzyme catalyses N-terminal L-methionyl-L-lysyl-[protein] + acetyl-CoA = N-terminal N(alpha)-acetyl-L-methionyl-L-lysyl-[protein] + CoA + H(+). The catalysed reaction is N-terminal L-methionyl-L-leucyl-[protein] + acetyl-CoA = N-terminal N(alpha)-acetyl-L-methionyl-L-leucyl-[protein] + CoA + H(+). It catalyses the reaction N-terminal L-methionyl-L-phenylalanyl-[protein] + acetyl-CoA = N-terminal N(alpha)-acetyl-L-methionyl-L-phenylalanyl-[protein] + CoA + H(+). It carries out the reaction N-terminal L-methionyl-L-tyrosyl-[protein] + acetyl-CoA = N-terminal N(alpha)-acetyl-L-methionyl-L-tyrosyl-[protein] + CoA + H(+). Functionally, N-alpha-acetyltransferase that acetylates the N-terminus of proteins that retain their initiating methionine. Has a broad substrate specificity: able to acetylate the initiator methionine of most peptides. Non-essential component of the NatA N-terminal acetyltransferase. The sequence is that of N-alpha-acetyltransferase NAT5 from Saccharomyces cerevisiae (strain ATCC 204508 / S288c) (Baker's yeast).